The chain runs to 130 residues: UPF0251 protein Swol_2090 (130 aa).

Belongs to the UPF0251 family.

The sequence is that of UPF0251 protein Swol_2090 from Syntrophomonas wolfei subsp. wolfei (strain DSM 2245B / Goettingen).